A 218-amino-acid chain; its full sequence is Protein N-lysine methyltransferase METTL21A (218 aa).

Residues W47, 73-75 (GAG), D94, W125, and A143 each bind S-adenosyl-L-methionine.

The protein belongs to the methyltransferase superfamily. METTL21 family. As to quaternary structure, interacts with heat shock 70 family members; at least some of these proteins are methylation substrates.

It is found in the cytoplasm. It carries out the reaction L-lysyl-[protein] + 3 S-adenosyl-L-methionine = N(6),N(6),N(6)-trimethyl-L-lysyl-[protein] + 3 S-adenosyl-L-homocysteine + 3 H(+). Its function is as follows. Protein-lysine methyltransferase that selectively trimethylates residues in heat shock protein 70 (HSP70) family members. Contributes to the in vivo trimethylation of Lys residues in HSPA1 and HSPA8. In vitro methylates 'Lys-561' in HSPA1, 'Lys-564' in HSPA2, 'Lys-585' in HSPA5, 'Lys-563' in HSPA6 and 'Lys-561' in HSPA8. The protein is Protein N-lysine methyltransferase METTL21A (METTL21A) of Bos taurus (Bovine).